The primary structure comprises 379 residues: Cytochrome b (379 aa).

4 helical membrane-spanning segments follow: residues 33–53 (FGSL…FLAM), 77–98 (WLIR…YFHI), 113–133 (WNMG…GYVL), and 178–198 (FFAF…IHLL). The heme b site is built by His-83 and His-97. His-182 and His-196 together coordinate heme b. An a ubiquinone-binding site is contributed by His-201. 4 helical membrane-spanning segments follow: residues 226 to 246 (IKDI…VMFS), 288 to 308 (LGGV…PILH), 320 to 340 (LSQC…WIGG), and 347 to 367 (FITI…ILMP).

This sequence belongs to the cytochrome b family. The cytochrome bc1 complex contains 11 subunits: 3 respiratory subunits (MT-CYB, CYC1 and UQCRFS1), 2 core proteins (UQCRC1 and UQCRC2) and 6 low-molecular weight proteins (UQCRH/QCR6, UQCRB/QCR7, UQCRQ/QCR8, UQCR10/QCR9, UQCR11/QCR10 and a cleavage product of UQCRFS1). This cytochrome bc1 complex then forms a dimer. Requires heme b as cofactor.

The protein resides in the mitochondrion inner membrane. Component of the ubiquinol-cytochrome c reductase complex (complex III or cytochrome b-c1 complex) that is part of the mitochondrial respiratory chain. The b-c1 complex mediates electron transfer from ubiquinol to cytochrome c. Contributes to the generation of a proton gradient across the mitochondrial membrane that is then used for ATP synthesis. The sequence is that of Cytochrome b (MT-CYB) from Ctenomys leucodon (White-toothed tuco-tuco).